The chain runs to 297 residues: ATP synthase gamma chain (297 aa).

This sequence belongs to the ATPase gamma chain family. As to quaternary structure, F-type ATPases have 2 components, CF(1) - the catalytic core - and CF(0) - the membrane proton channel. CF(1) has five subunits: alpha(3), beta(3), gamma(1), delta(1), epsilon(1). CF(0) has three main subunits: a, b and c.

Its subcellular location is the cell membrane. Functionally, produces ATP from ADP in the presence of a proton gradient across the membrane. The gamma chain is believed to be important in regulating ATPase activity and the flow of protons through the CF(0) complex. The polypeptide is ATP synthase gamma chain (Renibacterium salmoninarum (strain ATCC 33209 / DSM 20767 / JCM 11484 / NBRC 15589 / NCIMB 2235)).